The sequence spans 153 residues: MGPFSTITVSFLFCLAFWHPDQIGANPVYNAMSNADLMDFKNLLDHLEDRMPFEDEAVPPQALSEQSDEAGAALSPLPEVPPWTGEVSPAQRDGEALGRSTWEASERSALLKSKLRALLTAPRSLRRSSCFGGRIDRIGAQSGLGCNSFRYRR.

The first 25 residues, 1–25 (MGPFSTITVSFLFCLAFWHPDQIGA), serve as a signal peptide directing secretion. 2 propeptides span residues 26–123 (NPVY…TAPR) and 93–103 (DGEALGRSTWE). Positions 54-101 (EDEAVPPQALSEQSDEAGAALSPLPEVPPWTGEVSPAQRDGEALGRST) are disordered. S129 bears the Phosphoserine mark. The cysteines at positions 130 and 146 are disulfide-linked. The interval 147–151 (NSFRY) is important for degradation of atrial natriuretic peptide by IDE.

The protein belongs to the natriuretic peptide family. As to quaternary structure, homodimer; disulfide-linked antiparallel dimer. The precursor molecule is proteolytically cleaved by CORIN at Arg-123 to produce the atrial natriuretic peptide. Undergoes further proteolytic cleavage by unknown proteases to give rise to long-acting natriuretic peptide, vessel dilator and kaliuretic peptide. Additional processing gives rise to the auriculin and atriopeptin peptides. In the kidneys, alternative processing by an unknown protease results in the peptide urodilatin. In terms of processing, cleavage by MME initiates degradation of the factor and thereby regulates its activity. Degradation by IDE results in reduced activation of NPR1 (in vitro). During IDE degradation, the resulting products can temporarily stimulate NPR2 to produce cGMP, before the fragments are completely degraded and inactivated by IDE (in vitro). Post-translationally, degraded by IDE. Phosphorylation on Ser-129 decreases vasorelaxant activity.

It localises to the secreted. It is found in the perikaryon. The protein resides in the cell projection. Functionally, hormone that plays a key role in mediating cardio-renal homeostasis, and is involved in vascular remodeling and regulating energy metabolism. Acts by specifically binding and stimulating NPR1 to produce cGMP, which in turn activates effector proteins, such as PRKG1, that drive various biological responses. Regulates vasodilation, natriuresis, diuresis and aldosterone synthesis and is therefore essential for regulating blood pressure, controlling the extracellular fluid volume and maintaining the fluid-electrolyte balance. Also involved in inhibiting cardiac remodeling and cardiac hypertrophy by inducing cardiomyocyte apoptosis and attenuating the growth of cardiomyocytes and fibroblasts. Plays a role in female pregnancy by promoting trophoblast invasion and spiral artery remodeling in uterus, and thus prevents pregnancy-induced hypertension. In adipose tissue, acts in various cGMP- and PKG-dependent pathways to regulate lipid metabolism and energy homeostasis. This includes up-regulating lipid metabolism and mitochondrial oxygen utilization by activating the AMP-activated protein kinase (AMPK), and increasing energy expenditure by acting via MAPK11 to promote the UCP1-dependent thermogenesis of brown adipose tissue. Binds the clearance receptor NPR3 which removes the hormone from circulation. Its function is as follows. May have a role in cardio-renal homeostasis through regulation of natriuresis, diuresis, vasodilation, and inhibiting aldosterone synthesis. In vitro, promotes the production of cGMP and induces vasodilation. May promote natriuresis, at least in part, by enhancing prostaglandin E2 synthesis resulting in the inhibition of renal Na+-K+-ATPase. However reports on the involvement of this peptide in mammal blood volume and blood pressure homeostasis are conflicting; according to a report, in vivo it is not sufficient to activate cGMP and does not inhibit collecting duct transport nor effect diuresis and natriuresis. Appears to bind to specific receptors that are distinct from the receptors bound by atrial natriuretic peptide and vessel dilator. Possibly enhances protein excretion in urine by decreasing proximal tubular protein reabsorption. In terms of biological role, may have a role in cardio-renal homeostasis through regulation of natriuresis, diuresis, and vasodilation. In vitro, promotes the production of cGMP and induces vasodilation. May promote natriuresis, at least in part, by enhancing prostaglandin E2 synthesis resulting in the inhibition of renal Na+-K+-ATPase. However reports on the involvement of this peptide in mammal blood volume and blood pressure homeostasis are conflicting; according to a report it is not sufficient to activate cGMP and does not inhibit collecting duct transport nor effect diuresis and natriuresis. Appears to bind to specific receptors that are distinct from the receptors bound by the atrial natriuretic and long-acting natriuretic peptides. Possibly functions in protein excretion in urine by maintaining the integrity of the proximal tubules and enhancing protein excretion by decreasing proximal tubular protein reabsorption. May have a role in cardio-renal homeostasis through regulation of diuresis and inhibiting aldosterone synthesis. In vitro, promotes the production of cGMP and induces vasodilation. May promote natriuresis, at least in part, by enhancing prostaglandin E2 synthesis resulting in the inhibition of renal Na+-K+-ATPase. May have a role in potassium excretion but not sodium excretion (natriuresis). Possibly enhances protein excretion in urine by decreasing proximal tubular protein reabsorption. Functionally, hormone produced in the kidneys that appears to be important for maintaining cardio-renal homeostasis. Mediates vasodilation, natriuresis and diuresis primarily in the renal system, in order to maintain the extracellular fluid volume and control the fluid-electrolyte balance. Specifically binds and stimulates cGMP production by renal transmembrane receptors, likely NPR1. Urodilatin not ANP, may be the natriuretic peptide responsible for the regulation of sodium and water homeostasis in the kidney. Its function is as follows. May have a role in cardio-renal homeostasis through regulation of natriuresis and vasodilation. In vivo promotes natriuresis and in vitro, vasodilates renal artery strips. In terms of biological role, may have a role in cardio-renal homeostasis through regulation of regulation of natriuresis and vasodilation. In vivo promotes natriuresis. In vitro, vasodilates intestinal smooth muscle but not smooth muscle strips. May have a role in cardio-renal homeostasis through regulation of natriuresis and vasodilation. In vivo promotes natriuresis. In vitro, selectively vasodilates intestinal and vascular smooth muscle strips. Functionally, may have a role in cardio-renal homeostasis through regulation of natriuresis and vasodilation. In vivo promotes natriuresis. In vitro, selectively vasodilates intestinal smooth muscle but not vascular smooth muscle strips. This is Natriuretic peptides A (NPPA) from Oryctolagus cuniculus (Rabbit).